We begin with the raw amino-acid sequence, 90 residues long: Small ribosomal subunit protein uS15c (90 aa).

This sequence belongs to the universal ribosomal protein uS15 family. As to quaternary structure, part of the 30S ribosomal subunit.

It is found in the plastid. The protein localises to the chloroplast. This is Small ribosomal subunit protein uS15c (rps15) from Dioscorea elephantipes (Elephant's foot yam).